Here is a 100-residue protein sequence, read N- to C-terminus: Small ribosomal subunit protein uS14c (100 aa).

Belongs to the universal ribosomal protein uS14 family. In terms of assembly, part of the 30S ribosomal subunit.

Its subcellular location is the plastid. Binds 16S rRNA, required for the assembly of 30S particles. In Epifagus virginiana (Beechdrops), this protein is Small ribosomal subunit protein uS14c.